We begin with the raw amino-acid sequence, 85 residues long: Translation initiation factor IF-1 (85 aa).

The 72-residue stretch at 1–72 (MAKEELIEMH…SKGRITFRHI (72 aa)) folds into the S1-like domain.

The protein belongs to the IF-1 family. As to quaternary structure, component of the 30S ribosomal translation pre-initiation complex which assembles on the 30S ribosome in the order IF-2 and IF-3, IF-1 and N-formylmethionyl-tRNA(fMet); mRNA recruitment can occur at any time during PIC assembly.

Its subcellular location is the cytoplasm. Functionally, one of the essential components for the initiation of protein synthesis. Stabilizes the binding of IF-2 and IF-3 on the 30S subunit to which N-formylmethionyl-tRNA(fMet) subsequently binds. Helps modulate mRNA selection, yielding the 30S pre-initiation complex (PIC). Upon addition of the 50S ribosomal subunit IF-1, IF-2 and IF-3 are released leaving the mature 70S translation initiation complex. This is Translation initiation factor IF-1 from Polaromonas naphthalenivorans (strain CJ2).